The primary structure comprises 351 residues: MAVSRAPAPDSACQRMVWLFPLVFCLGSGSEVSQSSSDPQLMNGVLGESAVLPLKLPAGKIANIIIWNYEWEASQVTALVINLSNPESPQIMNTDVKKRLNITQSYSLQISNLTMADTGSYTAQITTKDSEVITFKYILRVFERLGNLETTNYTLLLENGTCQIHLACVLKNQSQTVSVEWQATGNISLGGPNVTIFWDPRNSGDQTYVCRAKNAVSNLSVSVSTQSLCKGVLTNPPWNAVWFMTTISIISAVILIFVCWSIHVWKRRGSLPLTSQHPESSQSTDGPGSPGNTVYAQVTRPMQEMKIPKPIKNDSMTIYSIVNHSREETVALTGYNQPITLKVNTLINYNS.

The N-terminal stretch at 1-30 (MAVSRAPAPDSACQRMVWLFPLVFCLGSGS) is a signal peptide. The Extracellular portion of the chain corresponds to 31–239 (EVSQSSSDPQ…KGVLTNPPWN (209 aa)). The Ig-like V-type domain maps to 36–130 (SSDPQLMNGV…YTAQITTKDS (95 aa)). Asparagine 82, asparagine 101, asparagine 112, asparagine 152, asparagine 159, asparagine 172, asparagine 186, asparagine 193, and asparagine 218 each carry an N-linked (GlcNAc...) asparagine glycan. The Ig-like C2-type domain occupies 147 to 210 (NLETTNYTLL…RNSGDQTYVC (64 aa)). Intrachain disulfides connect cysteine 162/cysteine 229 and cysteine 168/cysteine 210. A helical membrane pass occupies residues 240–262 (AVWFMTTISIISAVILIFVCWSI). The Cytoplasmic segment spans residues 263-351 (HVWKRRGSLP…KVNTLINYNS (89 aa)). The disordered stretch occupies residues 272–295 (PLTSQHPESSQSTDGPGSPGNTVY). 2 short sequence motifs (ITSM) span residues 293–298 (TVYAQV) and 317–322 (TIYSIV). Tyrosine 319 carries the post-translational modification Phosphotyrosine.

As to quaternary structure, homodimer. Interacts with PTN6 and, upon phosphorylation, with PTN11 and SH2D1A/SAP. In terms of processing, phosphorylated. In terms of tissue distribution, expressed on hematopoietic cells. Isoform 3 is expressed in thymocytes and B lymphocytes of C57Bl/6 strain.

It localises to the cell membrane. Self-ligand receptor of the signaling lymphocytic activation molecule (SLAM) family. SLAM receptors triggered by homo- or heterotypic cell-cell interactions are modulating the activation and differentiation of a wide variety of immune cells and thus are involved in the regulation and interconnection of both innate and adaptive immune response. Activities are controlled by presence or absence of small cytoplasmic adapter proteins, SH2D1A/SAP and/or SH2D1B/EAT-2. Triggers cytolytic activity only in natural killer cells (NK) expressing high surface densities of natural cytotoxicity receptors. Positive signaling in NK cells implicates phosphorylation of VAV1. NK cell activation seems to depend on SH2D1B and not on SH2D1A. In conjunction with SLAMF1 controls the transition between positive selection and the subsequent expansion and differentiation of the thymocytic natural killer T (NKT) cell lineage. Promotes T cell differentiation into a helper T-cell Th17 phenotype leading to increased IL-17 secretion; the costimulatory activity requires SH2D1A. Promotes recruitment of RORC to the IL-17 promoter. In conjunction with SLAMF1 and CD84/SLAMF5 may be a negative regulator of the humoral immune response. In the absence of SH2D1A/SAP can transmit negative signals to CD4(+) T-cells and NKT cells. Negatively regulates germinal center formation by inhibiting T-cell:B-cell adhesion; the function probably implicates increased association with PTPN6/SHP-1 via ITSMs in absence of SH2D1A/SAP. However, reported to mediated T-cell adhesion, to participate in stable T-cell:B-cell interactions and to be involved in maintaining B-cell tolerance in germinal centers and in preventing autoimmunity. Involved in regulation of autoimmunity. Isoform 3 may be suppressor of pathogenic T-cell proliferation. The protein is SLAM family member 6 (Slamf6) of Mus musculus (Mouse).